Consider the following 1935-residue polypeptide: Rho GTPase-activating protein 21 (1935 aa).

Residues 1–46 are disordered; that stretch reads MATRRATVPEQQQQQPSSPGSEISKNKDGQEQSEMVSPTEEEGFCW. One can recognise a PDZ domain in the interval 78–163; that stretch reads HTTVKDEENG…TLELSVMPKD (86 aa). 5 disordered regions span residues 212 to 237, 339 to 373, 413 to 456, 673 to 718, and 862 to 919; these read VEVP…TTQP, PPSY…PGSH, QNTT…QERL, TSTS…DSNS, and NSKT…DVFS. Composition is skewed to polar residues over residues 217 to 237, 348 to 373, and 413 to 429; these read SGTS…TTQP, SMFS…PGSH, and QNTT…SSGQ. Composition is skewed to low complexity over residues 441–451 and 673–685; these read PQSVQMRQRSV and TSTS…PAHT. The span at 708-718 shows a compositional bias: polar residues; that stretch reads SPEANAGDSNS. Residues 863 to 884 are compositionally biased toward basic and acidic residues; it reads SKTERSKSCDEGLDDYKDEGKL. The PH domain maps to 920–1033; it reads DSNKEGFLYF…WIKAIQENGN (114 aa). Residues 1056 to 1126 are disordered; that stretch reads TMMSSSSNKS…KGSWRRIMKK (71 aa). A compositionally biased stretch (low complexity) spans 1059–1072; it reads SSSSNKSEQSPKPS. Residues 1097 to 1119 show a composition bias toward basic and acidic residues; sequence PKQESERRLFSKDDISPPKDKGS. Positions 1140–1332 constitute a Rho-GAP domain; that stretch reads VRLDDCPPAH…TLIQQHDWFF (193 aa). 7 disordered regions span residues 1341-1393, 1411-1431, 1488-1510, 1525-1548, 1637-1665, 1688-1733, and 1838-1925; these read ITAV…GSGK, RKRK…ELDN, SEAT…RLPP, SMSD…KPKV, HRSK…SITP, SIRQ…EPEE, and SELS…SGTQ. Polar residues predominate over residues 1345–1355; that stretch reads QEESTVESQPV. Residues 1376–1393 are compositionally biased toward low complexity; it reads SDSASDSAKSKGSWGSGK. Polar residues-rich tracts occupy residues 1525 to 1543 and 1646 to 1662; these read SMSD…SAQR and RNVQ…TEGS. The span at 1691 to 1705 shows a compositional bias: basic and acidic residues; that stretch reads QKTDSECSAESKNEE. Composition is skewed to polar residues over residues 1872 to 1889 and 1898 to 1911; these read QVST…SQGT and NGDS…NNFS.

Its subcellular location is the golgi apparatus membrane. The protein resides in the cell junction. It is found in the cytoplasmic vesicle membrane. It localises to the cytoplasm. The protein localises to the cytoskeleton. GTPase-activating protein (GAP) for rhoa and cdc42. This is Rho GTPase-activating protein 21 (arhgap21) from Xenopus tropicalis (Western clawed frog).